A 477-amino-acid polypeptide reads, in one-letter code: S-triazine hydrolase (477 aa).

2 stretches are compositionally biased toward low complexity: residues 38 to 73 (SPTTSTSAAPKSSTPPGWQCSPASSTPTPTSHKSSS) and 120 to 132 (PLSSTTRTSDPTT). 2 disordered regions span residues 38–77 (SPTTSTSAAPKSSTPPGWQCSPASSTPTPTSHKSSSGVVH) and 120–143 (PLSSTTRTSDPTTSPAPGPPGSPF).

Belongs to the metallo-dependent hydrolases superfamily. ATZ/TRZ family.

Its pathway is xenobiotic degradation; melamine degradation. Its function is as follows. Hydrolytic deamination of the S-triazine substrate melamine. The protein is S-triazine hydrolase (trzA) of Gordonia rubripertincta (Rhodococcus corallinus).